Reading from the N-terminus, the 555-residue chain is CCR4-NOT transcription complex subunit 6-like (555 aa).

Residues M1 to R152 form a required for interaction with CNOT1, CNOT3 and CNOT7 region. 4 LRR repeats span residues H57 to L78, N80 to M101, S103 to F125, and Q126 to P148. The interval M158 to R555 is nuclease domain. E240 serves as a coordination point for Mg(2+). Residues E240, E276, H360, and P365 each contribute to the substrate site. Residue D410 participates in Mg(2+) binding. The Proton donor/acceptor role is filled by D410. N412, N479, and F484 together coordinate substrate.

Belongs to the CCR4/nocturin family. In terms of assembly, component of the CCR4-NOT complex; distinct complexes seem to exist that differ in the participation of probably mutually exclusive catalytic subunits; the complex contains two deadenylase subunits, CNOT6 or CNOT6L, and CNOT7 or CNOT8. Interacts with CNOT1, CNOT3, CNOT7, CNOT8 and CNOT9. Interacts with TOB1. Interacts with NANOS2. Interacts with ZFP36. Interacts with ZFP36L2. Interacts with RBM46. The cofactor is Mg(2+).

The protein localises to the cytoplasm. The protein resides in the nucleus. The catalysed reaction is Exonucleolytic cleavage of poly(A) to 5'-AMP.. Its function is as follows. Poly(A) nuclease with 3'-5' RNase activity. Catalytic component of the CCR4-NOT complex which is one of the major cellular mRNA deadenylases and is linked to various cellular processes including bulk mRNA degradation, miRNA-mediated repression, translational repression during translational initiation and general transcription regulation. Additional complex functions may be a consequence of its influence on mRNA expression. Involved in mRNA decay mediated by the major-protein-coding determinant of instability (mCRD) of the FOS gene in the cytoplasm. Involved in deadenylation-dependent degradation of CDKN1B mRNA. Its mRNA deadenylase activity can be inhibited by TOB1. Mediates cell proliferation and cell survival and prevents cellular senescence. The sequence is that of CCR4-NOT transcription complex subunit 6-like (Cnot6l) from Mus musculus (Mouse).